The sequence spans 576 residues: Aspartate--tRNA ligase (576 aa).

E171 is a binding site for L-aspartate. Residues 195 to 198 form an aspartate region; the sequence is QLFK. R217 is an L-aspartate binding site. Residues 217 to 219 and Q226 contribute to the ATP site; that span reads RDE. H450 contributes to the L-aspartate binding site. An ATP-binding site is contributed by E484. L-aspartate is bound at residue R491. Position 536 to 539 (536 to 539) interacts with ATP; it reads GLDR.

Belongs to the class-II aminoacyl-tRNA synthetase family. Type 1 subfamily. In terms of assembly, homodimer.

Its subcellular location is the cytoplasm. The enzyme catalyses tRNA(Asp) + L-aspartate + ATP = L-aspartyl-tRNA(Asp) + AMP + diphosphate. Catalyzes the attachment of L-aspartate to tRNA(Asp) in a two-step reaction: L-aspartate is first activated by ATP to form Asp-AMP and then transferred to the acceptor end of tRNA(Asp). The sequence is that of Aspartate--tRNA ligase from Buchnera aphidicola subsp. Baizongia pistaciae (strain Bp).